Consider the following 416-residue polypeptide: Cyclin-dependent kinase 8 (416 aa).

Residues 1 to 15 (MDYDFKVKLTGERER) form an interaction with CCNC region. Residues 21–287 (EYEGCKVGRG…SEQAMQDPYF (267 aa)) enclose the Protein kinase domain. ATP contacts are provided by residues 27 to 35 (VGRGTYGHV) and K52. Residue D151 is the Proton acceptor of the active site. Positions 313–416 (EEEPDDKGDK…PQYSHQTHRY (104 aa)) are disordered. A compositionally biased stretch (low complexity) spans 325 to 343 (QQQQQGNNHTNGTGHPGNQ). Composition is skewed to polar residues over residues 361–378 (PTTTSGGLIMTSDYQRSN) and 386–416 (PGPSTSQPQSSMGYTSTSQQPPQYSHQTHRY).

Belongs to the protein kinase superfamily. CMGC Ser/Thr protein kinase family. CDC2/CDKX subfamily. Component of the Mediator complex. Interacts with ccnc. Requires Mg(2+) as cofactor.

It localises to the nucleus. It catalyses the reaction L-seryl-[protein] + ATP = O-phospho-L-seryl-[protein] + ADP + H(+). It carries out the reaction L-threonyl-[protein] + ATP = O-phospho-L-threonyl-[protein] + ADP + H(+). The catalysed reaction is [DNA-directed RNA polymerase] + ATP = phospho-[DNA-directed RNA polymerase] + ADP + H(+). In terms of biological role, component of the Mediator complex, a coactivator involved in regulated gene transcription of nearly all RNA polymerase II-dependent genes. Mediator functions as a bridge to convey information from gene-specific regulatory proteins to the basal RNA polymerase II transcription machinery. Mediator is recruited to promoters by direct interactions with regulatory proteins and serves as a scaffold for the assembly of a functional pre-initiation complex with RNA polymerase II and the general transcription factors. Phosphorylates the CTD (C-terminal domain) of the large subunit of RNA polymerase II (RNAp II), which may inhibit the formation of a transcription initiation complex. The polypeptide is Cyclin-dependent kinase 8 (cdk8) (Xenopus laevis (African clawed frog)).